A 295-amino-acid chain; its full sequence is Craniofacial development protein 1 (295 aa).

2 stretches are compositionally biased toward acidic residues: residues 1–18 (MEEF…DEDY) and 25–43 (YSED…DGEE). 2 disordered regions span residues 1-153 (MEEF…LDKP) and 188-217 (FLKQ…IKRA). A compositionally biased stretch (basic residues) spans 49–65 (KGKRRKAQGIPARKRKQ). 4 positions are modified to phosphoserine: Ser80, Ser83, Ser84, and Ser112. Residue Lys146 forms a Glycyl lysine isopeptide (Lys-Gly) (interchain with G-Cter in SUMO2) linkage. Positions 174 to 213 (VTKEVDAASKEAKSFLKQTEREKPQALVTSPATPLPAGSG) are hydrophilic. The span at 188–197 (FLKQTEREKP) shows a compositional bias: basic and acidic residues. Position 212 is a phosphoserine (Ser212). The 82-residue stretch at 214–295 (IKRASGMSSL…RDLRLSKMKP (82 aa)) folds into the BCNT-C domain. Lys215 carries the N6-methyllysine modification. Ser246 carries the post-translational modification Phosphoserine.

As to expression, expressed in lung, liver and heart, with higher expression in teeth.

The protein localises to the chromosome. It is found in the centromere. Its subcellular location is the kinetochore. In terms of biological role, may play a role during embryogenesis. May modulate tooth organogenesis since alterations of this protein function affect tooth organs size as well as individual cell fate and survival. In embryonic cells, blockage of the function results in increased number of apoptotic cells, reduced proliferation, alterations in cell shape and fibronection matrix synthesis. The polypeptide is Craniofacial development protein 1 (Cfdp1) (Mus musculus (Mouse)).